Here is a 558-residue protein sequence, read N- to C-terminus: UvrABC system protein C (558 aa).

Residues 12–92 form the GIY-YIG domain; the sequence is LLPGVYIFYG…IFNHKPKYNV (81 aa). Residues 200–235 enclose the UVR domain; it reads SETLDLIEEKMKKHAKMMDFENAAKYRDLLVKFENV.

It belongs to the UvrC family. As to quaternary structure, interacts with UvrB in an incision complex.

Its subcellular location is the cytoplasm. In terms of biological role, the UvrABC repair system catalyzes the recognition and processing of DNA lesions. UvrC both incises the 5' and 3' sides of the lesion. The N-terminal half is responsible for the 3' incision and the C-terminal half is responsible for the 5' incision. This Pseudothermotoga lettingae (strain ATCC BAA-301 / DSM 14385 / NBRC 107922 / TMO) (Thermotoga lettingae) protein is UvrABC system protein C.